Reading from the N-terminus, the 685-residue chain is Glycine--tRNA ligase beta subunit (685 aa).

This sequence belongs to the class-II aminoacyl-tRNA synthetase family. Tetramer of two alpha and two beta subunits.

It is found in the cytoplasm. It carries out the reaction tRNA(Gly) + glycine + ATP = glycyl-tRNA(Gly) + AMP + diphosphate. The protein is Glycine--tRNA ligase beta subunit of Azotobacter vinelandii (strain DJ / ATCC BAA-1303).